The following is a 354-amino-acid chain: Protein OPG055 (354 aa).

The protein belongs to the orthopoxvirus OPG055 family.

Functionally, stimulates increases in peripheral microtubule dynamics and may increase the motility of the infected cells, contributing to cell-to-cell spread of the virus. Seems to inhibit the signaling via the GTPase RHOA and DIAPH1/mDia. In Homo sapiens (Human), this protein is Protein OPG055 (OPG055).